A 397-amino-acid chain; its full sequence is Lysophospholipid transporter LplT (397 aa).

A run of 11 helical transmembrane segments spans residues 16-36 (MMAV…LLFA), 53-73 (VLQM…GQVA), 91-111 (LGAV…LVGV), 139-159 (LMES…GMLA), 164-184 (GAAL…NLLI), 229-249 (WGAG…ALGI), 257-277 (YLNA…AKLV), 282-302 (VSRC…FSLQ), 304-324 (AALP…FFVV), 344-364 (IAVQ…LYSL), and 372-392 (VVGI…GLWL).

Belongs to the major facilitator superfamily. LplT (TC 2.A.1.42) family.

It is found in the cell inner membrane. Functionally, catalyzes the facilitated diffusion of 2-acyl-glycero-3-phosphoethanolamine (2-acyl-GPE) into the cell. This Cronobacter sakazakii (strain ATCC BAA-894) (Enterobacter sakazakii) protein is Lysophospholipid transporter LplT.